We begin with the raw amino-acid sequence, 166 residues long: 2-amino-4-hydroxy-6-hydroxymethyldihydropteridine pyrophosphokinase (166 aa).

Belongs to the HPPK family.

The catalysed reaction is 6-hydroxymethyl-7,8-dihydropterin + ATP = (7,8-dihydropterin-6-yl)methyl diphosphate + AMP + H(+). It functions in the pathway cofactor biosynthesis; tetrahydrofolate biosynthesis; 2-amino-4-hydroxy-6-hydroxymethyl-7,8-dihydropteridine diphosphate from 7,8-dihydroneopterin triphosphate: step 4/4. Functionally, catalyzes the transfer of pyrophosphate from adenosine triphosphate (ATP) to 6-hydroxymethyl-7,8-dihydropterin, an enzymatic step in folate biosynthesis pathway. This Streptococcus pyogenes serotype M18 (strain MGAS8232) protein is 2-amino-4-hydroxy-6-hydroxymethyldihydropteridine pyrophosphokinase (folK).